The primary structure comprises 386 residues: 3-ketosteroid-9-alpha-monooxygenase, oxygenase component (386 aa).

Residues 26 to 128 (WHCLGVAKDY…TDVRSGLLFV (103 aa)) form the Rieske domain. Positions 67, 69, 86, and 89 each coordinate [2Fe-2S] cluster. Residues Asn-175, His-181, His-186, and Asp-304 each coordinate Fe cation.

Homotrimer. The two-component system 3-ketosteroid-9-alpha-monooxygenase is composed of an oxygenase component KshA and a reductase component KshB. [2Fe-2S] cluster serves as cofactor. Requires Fe cation as cofactor.

The enzyme catalyses androsta-1,4-diene-3,17-dione + 2 reduced [2Fe-2S]-[ferredoxin] + O2 + 2 H(+) = 9alpha-hydroxyandrosta-1,4-diene-3,17-dione + 2 oxidized [2Fe-2S]-[ferredoxin] + H2O. It catalyses the reaction androst-4-ene-3,17-dione + NADH + O2 + H(+) = 9alpha-hydroxy-androst-4-ene-3,17-dione + NAD(+) + H2O. It carries out the reaction 3-oxochol-4-en-22-oate + NADH + O2 + H(+) = 9alpha-hydroxy-3-oxochol-4-en-22-oate + NAD(+) + H2O. The catalysed reaction is 3-oxochola-1,4-dien-22-oate + NADH + O2 + H(+) = 9alpha-hydroxy-3-oxochola-1,4-dien-22-oate + NAD(+) + H2O. The enzyme catalyses 3-oxochol-4-en-22-oyl-CoA + NADH + O2 + H(+) = 9alpha-hydroxy-3-oxochol-4-en-22-oyl-CoA + NAD(+) + H2O. It catalyses the reaction 3-oxochola-1,4-dien-22-oyl-CoA + NADH + O2 + H(+) = 9alpha-hydroxy-3-oxochola-1,4-dien-22-oyl-CoA + NAD(+) + H2O. The protein operates within lipid metabolism; steroid biosynthesis. Functionally, involved in the degradation of cholesterol. Catalyzes the introduction of a 9a-hydroxyl moiety into 1,4-androstadiene-3,17-dione (ADD) to yield the 9alpha-hydroxy-1,4-androstadiene-3,17-dione (9OHADD) intermediate which spontaneously form 3-hydroxy-9,10-seconandrost-1,3,5(10)-triene-9,17-dione (HSA) via the meta-cleavage of ring B with concomitant aromatization of ring A. KSH is also able to use 4-androstene-3,17-dione (AD), 3-oxo-23,24-bisnorcholesta-4-en-22-oate (4-BNC), 3-oxo-23,24-bisnorcholesta-1,4-dien-22-oate (1,4-BNC), 3-oxo-23,24-bisnorcholesta-4-en-22-oyl-coenzyme A thioester (4-BNC-CoA) and 3-oxo-23,24-bisnorcholesta-1,4-dien-22-oyl-coenzyme A thioester (1,4-BNC-CoA) as substrates. The protein is 3-ketosteroid-9-alpha-monooxygenase, oxygenase component (kshA) of Mycobacterium tuberculosis (strain ATCC 25618 / H37Rv).